The chain runs to 416 residues: Glutamate dehydrogenase (416 aa).

Lys-105 is a catalytic residue.

It belongs to the Glu/Leu/Phe/Val dehydrogenases family. As to quaternary structure, homohexamer.

The catalysed reaction is L-glutamate + NAD(+) + H2O = 2-oxoglutarate + NH4(+) + NADH + H(+). It catalyses the reaction L-glutamate + NADP(+) + H2O = 2-oxoglutarate + NH4(+) + NADPH + H(+). The protein is Glutamate dehydrogenase (gdhA) of Thermotoga maritima (strain ATCC 43589 / DSM 3109 / JCM 10099 / NBRC 100826 / MSB8).